The following is an 80-amino-acid chain: Putative membrane protein insertion efficiency factor (80 aa).

It belongs to the UPF0161 family.

It localises to the cell membrane. Functionally, could be involved in insertion of integral membrane proteins into the membrane. In Shouchella clausii (strain KSM-K16) (Alkalihalobacillus clausii), this protein is Putative membrane protein insertion efficiency factor.